A 66-amino-acid polypeptide reads, in one-letter code: DNA gyrase inhibitor YacG (66 aa).

Cys10, Cys13, Cys29, and Cys33 together coordinate Zn(2+). Residues 46-66 (KRIPSDVQITDSDEWSDETRY) are disordered. Positions 56–66 (DSDEWSDETRY) are enriched in acidic residues.

It belongs to the DNA gyrase inhibitor YacG family. Interacts with GyrB. Requires Zn(2+) as cofactor.

In terms of biological role, inhibits all the catalytic activities of DNA gyrase by preventing its interaction with DNA. Acts by binding directly to the C-terminal domain of GyrB, which probably disrupts DNA binding by the gyrase. This is DNA gyrase inhibitor YacG from Sodalis glossinidius (strain morsitans).